A 261-amino-acid polypeptide reads, in one-letter code: Cytochrome c oxidase subunit 3 (261 aa).

At 1-15 (MTHQTHAYHMVNPSP) the chain is on the mitochondrial matrix side. The chain crosses the membrane as a helical span at residues 16 to 34 (WPLTGALSALLMTSGLIMW). The Mitochondrial intermembrane segment spans residues 35–40 (FHYNSM). The helical transmembrane segment at 41–66 (SLLTLGFTTNLLTMYQWWRDVIREGT) threads the bilayer. Topologically, residues 67–72 (FQGHHT) are mitochondrial matrix. Residues 73 to 105 (PIVQKGLRYGMVLFIVSEVFFFAGFFWAFYHSS) form a helical membrane-spanning segment. The Mitochondrial intermembrane portion of the chain corresponds to 106 to 128 (LAPTPELGGCWPPTGIIPLNPLE). A helical membrane pass occupies residues 129–152 (VPLLNTSVLLASGVSITWAHHSLM). The Mitochondrial matrix portion of the chain corresponds to 153–155 (EGN). A helical transmembrane segment spans residues 156 to 183 (RKHMLQALFITISLGVYFTLLQASEYYE). Topologically, residues 184–190 (TSFTISD) are mitochondrial intermembrane. A helical membrane pass occupies residues 191–223 (GVYGSTFFMATGFHGLHVIIGSTFLIVCFLRQL). Topologically, residues 224–232 (YYHFTSNHH) are mitochondrial matrix. A helical membrane pass occupies residues 233–256 (FGFEAAAWYWHFVDVVWLFLYVSI). The Mitochondrial intermembrane portion of the chain corresponds to 257-261 (YWWGS).

Belongs to the cytochrome c oxidase subunit 3 family. In terms of assembly, component of the cytochrome c oxidase (complex IV, CIV), a multisubunit enzyme composed of 14 subunits. The complex is composed of a catalytic core of 3 subunits MT-CO1, MT-CO2 and MT-CO3, encoded in the mitochondrial DNA, and 11 supernumerary subunits COX4I, COX5A, COX5B, COX6A, COX6B, COX6C, COX7A, COX7B, COX7C, COX8 and NDUFA4, which are encoded in the nuclear genome. The complex exists as a monomer or a dimer and forms supercomplexes (SCs) in the inner mitochondrial membrane with NADH-ubiquinone oxidoreductase (complex I, CI) and ubiquinol-cytochrome c oxidoreductase (cytochrome b-c1 complex, complex III, CIII), resulting in different assemblies (supercomplex SCI(1)III(2)IV(1) and megacomplex MCI(2)III(2)IV(2)).

It localises to the mitochondrion inner membrane. It catalyses the reaction 4 Fe(II)-[cytochrome c] + O2 + 8 H(+)(in) = 4 Fe(III)-[cytochrome c] + 2 H2O + 4 H(+)(out). In terms of biological role, component of the cytochrome c oxidase, the last enzyme in the mitochondrial electron transport chain which drives oxidative phosphorylation. The respiratory chain contains 3 multisubunit complexes succinate dehydrogenase (complex II, CII), ubiquinol-cytochrome c oxidoreductase (cytochrome b-c1 complex, complex III, CIII) and cytochrome c oxidase (complex IV, CIV), that cooperate to transfer electrons derived from NADH and succinate to molecular oxygen, creating an electrochemical gradient over the inner membrane that drives transmembrane transport and the ATP synthase. Cytochrome c oxidase is the component of the respiratory chain that catalyzes the reduction of oxygen to water. Electrons originating from reduced cytochrome c in the intermembrane space (IMS) are transferred via the dinuclear copper A center (CU(A)) of subunit 2 and heme A of subunit 1 to the active site in subunit 1, a binuclear center (BNC) formed by heme A3 and copper B (CU(B)). The BNC reduces molecular oxygen to 2 water molecules using 4 electrons from cytochrome c in the IMS and 4 protons from the mitochondrial matrix. This is Cytochrome c oxidase subunit 3 (MT-CO3) from Canis lupus (Gray wolf).